The sequence spans 188 residues: GPI-anchored hemophore ARB_01017 (188 aa).

The first 17 residues, Met-1–Ala-17, serve as a signal peptide directing secretion. The CFEM domain maps to Gln-18–Thr-107. 4 disulfides stabilise this stretch: Cys-26–Cys-64, Cys-30–Cys-59, Cys-39–Cys-45, and Cys-47–Cys-80. Asp-42 contributes to the heme binding site. A disordered region spans residues Thr-95 to Thr-163. Residue Asn-165 is the site of GPI-anchor amidated asparagine attachment. The propeptide at Ala-166–Ala-188 is removed in mature form.

Belongs to the RBT5 family. In terms of processing, the GPI-anchor is attached to the protein in the endoplasmic reticulum and serves to target the protein to the cell surface. There, the glucosamine-inositol phospholipid moiety is cleaved off and the GPI-modified mannoprotein is covalently attached via its lipidless GPI glycan remnant to the 1,6-beta-glucan of the outer cell wall layer.

The protein localises to the secreted. It is found in the cell wall. It localises to the cell membrane. GPI-anchored cell wall protein involved in stabilizing the cell wall. This chain is GPI-anchored hemophore ARB_01017, found in Arthroderma benhamiae (strain ATCC MYA-4681 / CBS 112371) (Trichophyton mentagrophytes).